The following is a 474-amino-acid chain: Catalase (474 aa).

Active-site residues include histidine 52 and asparagine 124. Heme is bound at residue tyrosine 334.

It belongs to the catalase family. Heme serves as cofactor.

The catalysed reaction is 2 H2O2 = O2 + 2 H2O. Decomposes hydrogen peroxide into water and oxygen; serves to protect cells from the toxic effects of hydrogen peroxide. The protein is Catalase (katA) of Campylobacter jejuni subsp. jejuni serotype O:2 (strain ATCC 700819 / NCTC 11168).